A 305-amino-acid chain; its full sequence is Olfactory receptor 9G19 (305 aa).

At 1-24 the chain is on the extracellular side; sequence MDQNNNTVSEFIMLGFTTDPVIQK. A helical membrane pass occupies residues 25 to 45; it reads VLFAVFLVVYTLTLMGNSSLI. The Cytoplasmic portion of the chain corresponds to 46 to 55; that stretch reads MLICNDSRLH. The chain crosses the membrane as a helical span at residues 56–76; that stretch reads TPMYFFIGNLSFLDLGLSSVY. Residues 77-96 are Extracellular-facing; it reads TPKILETCISEDKSISFAGC. The cysteines at positions 96 and 178 are disulfide-linked. The chain crosses the membrane as a helical span at residues 97–117; the sequence is VAQFFFSAALDYTECYLLAAM. The Cytoplasmic portion of the chain corresponds to 118 to 138; the sequence is AYDRYVAISKPLLYSQAMSLK. A helical membrane pass occupies residues 139–159; that stretch reads LCVCFVVASYVGGFINSVIIT. The Extracellular portion of the chain corresponds to 160 to 204; it reads KDTFALTFCNDNVIDDFFCDIPPLVKLACGKKKSFQSVLFFLLTS. The chain crosses the membrane as a helical span at residues 205–225; the sequence is NVIIPIVFILATYLFIIATIL. Over 226-236 the chain is Cytoplasmic; the sequence is RIRSTQGRLKA. Residues 237–257 form a helical membrane-spanning segment; sequence FSTCSSHLISVTLYYGSILYI. Topologically, residues 258–270 are extracellular; sequence YARPRSSYSLDRD. Residues 271–291 traverse the membrane as a helical segment; it reads KIVSTFYTVVFPMLNPLIYSL. Topologically, residues 292-305 are cytoplasmic; sequence RNKDVKEALNKLLK.

This sequence belongs to the G-protein coupled receptor 1 family.

The protein resides in the cell membrane. Functionally, odorant receptor. This is Olfactory receptor 9G19 from Mus musculus (Mouse).